A 179-amino-acid polypeptide reads, in one-letter code: FADH(2)-dependent resorcinol hydroxylase, reductase component (179 aa).

This sequence belongs to the non-flavoprotein flavin reductase family. In terms of assembly, the FADH(2)-dependent resorcinol hydroxylase is composed of two subunits, GraA (the oxygenase component) and GraD (the reductase component). Both subunits are required for activity.

The enzyme catalyses FADH2 + NAD(+) = FAD + NADH + 2 H(+). Its pathway is aromatic compound metabolism. Involved in the gamma-resorcylate (2,6-dihydroxybenzoate) catabolism. Reductase component of the resorcinol hydroxylase, which catalyzes the FADPH-dependent conversion of resorcinol to hydroxyquinol. Catalyzes the reduction of FAD by NADH. The reduced flavin is then transferred to the oxygenase component GraA. The chain is FADH(2)-dependent resorcinol hydroxylase, reductase component from Rhizobium sp. (strain MTP-10005).